The primary structure comprises 417 residues: Chaperone SurA (417 aa).

An N-terminal signal peptide occupies residues 1–12 (MGAALLCSFAHA). 2 consecutive PpiC domains span residues 163–264 (SEEY…KLEE) and 273–372 (RDEV…QVLG).

It is found in the periplasm. The enzyme catalyses [protein]-peptidylproline (omega=180) = [protein]-peptidylproline (omega=0). In terms of biological role, chaperone involved in the correct folding and assembly of outer membrane proteins. Recognizes specific patterns of aromatic residues and the orientation of their side chains, which are found more frequently in integral outer membrane proteins. May act in both early periplasmic and late outer membrane-associated steps of protein maturation. This is Chaperone SurA from Pseudomonas aeruginosa (strain ATCC 15692 / DSM 22644 / CIP 104116 / JCM 14847 / LMG 12228 / 1C / PRS 101 / PAO1).